A 442-amino-acid polypeptide reads, in one-letter code: Protein phosphatase 2C 3 (442 aa).

Residues 30-100 (RFRMSPSEMN…VSISDGNSSV (71 aa)) are disordered. Over residues 79–90 (PEEESVSLEDSD) the composition is skewed to acidic residues. One can recognise a PPM-type phosphatase domain in the interval 120–433 (RYGVASVCGR…DNVSVVVIDL (314 aa)). Aspartate 162, glycine 163, and aspartate 339 together coordinate Mn(2+). The segment at 363–401 (GRGRRRGETQTPGRRSEEEGKEEEEKVVGSRKNGKRGEI) is disordered. Residues 376-390 (RRSEEEGKEEEEKVV) are compositionally biased toward basic and acidic residues. A Mn(2+)-binding site is contributed by aspartate 424.

Belongs to the PP2C family. Part of a K(+)-channel calcium-sensing kinase/phosphatase complex composed by a calcium sensor CBL (CBL1, CBL2, CBL3 or CBL9), a kinase CIPK (CIPK6, CIPK16 or CIPK23), a phosphatase PP2C (AIP1) and a K(+)-channel (AKT1). Interacts with AKT1 and CIPK23. Interacts with PYL8/RCAR3 in an abscisic acid-independent. Interacts with PYR1/RCAR11 in an abscisic acid-dependent manner. Mg(2+) serves as cofactor. It depends on Mn(2+) as a cofactor. In terms of tissue distribution, expressed in shoot meristem, vascular tissues of cotyledons, and in primary roots surrounding the root meristem. Highly expressed in seeds.

The protein resides in the cell membrane. The protein localises to the cytoplasm. It is found in the nucleus. The catalysed reaction is O-phospho-L-seryl-[protein] + H2O = L-seryl-[protein] + phosphate. It carries out the reaction O-phospho-L-threonyl-[protein] + H2O = L-threonyl-[protein] + phosphate. Functionally, involved in the negative regulation of the K(+) potassium channel AKT1 by its dephosphorylation, antagonistically to CIPK proteins (e.g. CIPK23). Functions as a positive regulator of abscisic acid-mediated cell signaling during seedling growth. Involved in the regulation of seed dormancy. Acts as a negative regulator of seed dormancy by inhibiting abscisic signaling and subsequently activating gibberellic acid signaling. The sequence is that of Protein phosphatase 2C 3 from Arabidopsis thaliana (Mouse-ear cress).